A 351-amino-acid polypeptide reads, in one-letter code: Phenylalanine--tRNA ligase alpha subunit (351 aa).

Glu-276 lines the Mg(2+) pocket.

It belongs to the class-II aminoacyl-tRNA synthetase family. Phe-tRNA synthetase alpha subunit type 1 subfamily. As to quaternary structure, tetramer of two alpha and two beta subunits. It depends on Mg(2+) as a cofactor.

Its subcellular location is the cytoplasm. It catalyses the reaction tRNA(Phe) + L-phenylalanine + ATP = L-phenylalanyl-tRNA(Phe) + AMP + diphosphate + H(+). The sequence is that of Phenylalanine--tRNA ligase alpha subunit from Psychrobacter arcticus (strain DSM 17307 / VKM B-2377 / 273-4).